The following is a 113-amino-acid chain: Large ribosomal subunit protein uL22 (113 aa).

This sequence belongs to the universal ribosomal protein uL22 family. As to quaternary structure, part of the 50S ribosomal subunit.

Its function is as follows. This protein binds specifically to 23S rRNA; its binding is stimulated by other ribosomal proteins, e.g. L4, L17, and L20. It is important during the early stages of 50S assembly. It makes multiple contacts with different domains of the 23S rRNA in the assembled 50S subunit and ribosome. In terms of biological role, the globular domain of the protein is located near the polypeptide exit tunnel on the outside of the subunit, while an extended beta-hairpin is found that lines the wall of the exit tunnel in the center of the 70S ribosome. This is Large ribosomal subunit protein uL22 from Bacillus thuringiensis subsp. konkukian (strain 97-27).